Reading from the N-terminus, the 371-residue chain is 3-isopropylmalate dehydrogenase (371 aa).

77–90 contributes to the NAD(+) binding site; it reads GPKWDDNPPHLRPE. Residues arginine 97, arginine 107, arginine 135, and aspartate 224 each contribute to the substrate site. 3 residues coordinate Mg(2+): aspartate 224, aspartate 248, and aspartate 252. 282 to 294 lines the NAD(+) pocket; it reads GSAPDIAGMNKAN.

The protein belongs to the isocitrate and isopropylmalate dehydrogenases family. LeuB type 1 subfamily. Homodimer. The cofactor is Mg(2+). Mn(2+) serves as cofactor.

The protein localises to the cytoplasm. The enzyme catalyses (2R,3S)-3-isopropylmalate + NAD(+) = 4-methyl-2-oxopentanoate + CO2 + NADH. It functions in the pathway amino-acid biosynthesis; L-leucine biosynthesis; L-leucine from 3-methyl-2-oxobutanoate: step 3/4. Functionally, catalyzes the oxidation of 3-carboxy-2-hydroxy-4-methylpentanoate (3-isopropylmalate) to 3-carboxy-4-methyl-2-oxopentanoate. The product decarboxylates to 4-methyl-2 oxopentanoate. The chain is 3-isopropylmalate dehydrogenase from Geobacillus kaustophilus (strain HTA426).